We begin with the raw amino-acid sequence, 66 residues long: Opicalcin-1 (66 aa).

Residues 1–22 (MKPSLIIVTFIVVFMAISCVAA) form the signal peptide. Residues 23–31 (DDEQETWIE) constitute a propeptide that is removed on maturation. Disulfide bonds link cysteine 36/cysteine 50, cysteine 43/cysteine 54, and cysteine 49/cysteine 65. Residues 55 to 57 (KRR) are essential for stimulation of [3H]ryanodine binding to RYR1.

Belongs to the scorpion calcin family. In terms of tissue distribution, expressed by the venom gland.

The protein resides in the secreted. In terms of biological role, this toxin stabilizes ryanodine receptor 1 (RyR1) opening in a long-lasting subconductance state (35% of the full conductance state). Furthermore, it triggers calcium release from sarcoplasmic vesicles (2 nM are enough to induce a sharp release, and 67% of the total calcium is released after toxin (100 nM) addition) probably by acting as a cell-penetrating peptide (CPP). In addition, it has been shown to dose-dependently stimulate ryanodine binding to RyR1 (EC(50)=0.3 nM). It also augments the bell-shaped calcium-[3H]ryanodine binding curve that is maximal at about 10 uM calcium concentration. It binds a different site as ryanodine. It acts synergistically with caffeine. In vivo, intracerebroventricular injection into mice induces neurotoxic symptoms, followed by death. The chain is Opicalcin-1 from Opistophthalmus carinatus (African yellow leg scorpion).